We begin with the raw amino-acid sequence, 345 residues long: S-adenosylmethionine:tRNA ribosyltransferase-isomerase (345 aa).

This sequence belongs to the QueA family. Monomer.

The protein resides in the cytoplasm. It catalyses the reaction 7-aminomethyl-7-carbaguanosine(34) in tRNA + S-adenosyl-L-methionine = epoxyqueuosine(34) in tRNA + adenine + L-methionine + 2 H(+). It participates in tRNA modification; tRNA-queuosine biosynthesis. In terms of biological role, transfers and isomerizes the ribose moiety from AdoMet to the 7-aminomethyl group of 7-deazaguanine (preQ1-tRNA) to give epoxyqueuosine (oQ-tRNA). The protein is S-adenosylmethionine:tRNA ribosyltransferase-isomerase of Anaeromyxobacter sp. (strain K).